We begin with the raw amino-acid sequence, 962 residues long: Activity-dependent neuroprotective protein 2a (962 aa).

The segment at 75–98 (LCCSLCWYSSRSVPTFRSHIHRCH) adopts a C2H2-type 1 zinc-finger fold. Residues 108–130 (LMCPYCPFVSSPKVTEQHIQFFH) form a C2H2-type 2; degenerate zinc finger. The C2H2-type 3; degenerate zinc finger occupies 165–188 (YTCATCGYHDSLLYVMKKHVLVNH). The C2H2-type 4 zinc finger occupies 219–244 (YHCKLCKLPAETIEHLLYHILSSEKH). The C2H2-type 5; degenerate zinc-finger motif lies at 527-547 (VKCLRCKILLTEQGIFQHLLH). C2H2-type zinc fingers lie at residues 549–572 (LKCL…KKEH) and 650–673 (NACP…QTKH). Residues 688–712 (YKCIYCFGVYTEKSTPKTISIHVQR) form a C2H2-type 8; degenerate zinc finger. Positions 753–781 (QGAPEFPKPKKEAVTPRNRRRNTKASKTG) are disordered. The segment at residues 795 to 854 (PMGMERTSFEDRKDFLSQYFHRKPYVTKTEIELLASRLWINKADVKAHFNSKLTKCLKAI) is a DNA-binding region (homeobox).

The protein localises to the nucleus. May be involved in transcriptional regulation. Required for progression through late erythroid differentiation. May be involved in vasculogenesis. The polypeptide is Activity-dependent neuroprotective protein 2a (Danio rerio (Zebrafish)).